Here is a 298-residue protein sequence, read N- to C-terminus: Enoyl-CoA hydratase ACTT6 (298 aa).

This sequence belongs to the enoyl-CoA hydratase/isomerase family.

The protein operates within mycotoxin biosynthesis. Enoyl-CoA hydratase; part of the gene clusters that mediate the biosynthesis of the host-selective toxins (HSTs) ACT-toxins responsible for brown spot of tangerine disease by the tangerine pathotype which affects tangerines and mandarins. ACT-toxins consist of three moieties, 9,10-epoxy-8-hydroxy-9-methyl-decatrienoic acid (EDA), valine and a polyketide. ACT-toxin I is toxic to both citrus and pear; toxin II the 5''-deoxy derivative of ACT-toxin I, is highly toxic to pear and slightly toxic to citrus. On cellular level, ACT-toxins affect plasma membrane of susceptible cells and cause a sudden increase in loss of K(+) after a few minutes of toxin treatment. The acyl-CoA ligase ACTT1, the hydrolase ACTT2, the enoyl-CoA hydratases ACTT3 and ACTT6, and the acyl-CoA synthetase ACTT5 are all involved in the biosynthesis of the AK-, AF- and ACT-toxin common 9,10-epoxy-8-hydroxy-9-methyl-decatrienoic acid (EDA) structural moiety. The exact role of each enzyme, and of additional enzymes identified within the AF-toxin clusters have still to be determined. On the other hand, ACTTS1 to ACTTS4 are specific to the tangerine pathotype. The function of ACTTS3 is to elongate the polyketide chain portion of ACT-toxin that is unique to this toxin. The enoyl-reductase ACTTS2 might complement the missing enoyl-reductase (ER) domain in ACTTS3 in the synthesis of the polyketide portion of ACT-toxin. The roles of the nonribosomal peptide synthetases-related proteins ACTTS1 and ACTTS4 have also still not been elucidated. This chain is Enoyl-CoA hydratase ACTT6, found in Alternaria alternata (Alternaria rot fungus).